We begin with the raw amino-acid sequence, 423 residues long: Imidazolonepropionase (423 aa).

Positions 80 and 82 each coordinate Fe(3+). Residues histidine 80 and histidine 82 each contribute to the Zn(2+) site. 3 residues coordinate 4-imidazolone-5-propanoate: arginine 89, tyrosine 152, and histidine 185. Tyrosine 152 is a binding site for N-formimidoyl-L-glutamate. Residue histidine 250 coordinates Fe(3+). Residue histidine 250 participates in Zn(2+) binding. Residue glutamine 253 participates in 4-imidazolone-5-propanoate binding. Aspartate 325 lines the Fe(3+) pocket. Aspartate 325 lines the Zn(2+) pocket. N-formimidoyl-L-glutamate-binding residues include asparagine 327 and glycine 329. Residue threonine 330 participates in 4-imidazolone-5-propanoate binding.

This sequence belongs to the metallo-dependent hydrolases superfamily. HutI family. Zn(2+) serves as cofactor. Fe(3+) is required as a cofactor.

It localises to the cytoplasm. The catalysed reaction is 4-imidazolone-5-propanoate + H2O = N-formimidoyl-L-glutamate. It participates in amino-acid degradation; L-histidine degradation into L-glutamate; N-formimidoyl-L-glutamate from L-histidine: step 3/3. Catalyzes the hydrolytic cleavage of the carbon-nitrogen bond in imidazolone-5-propanoate to yield N-formimidoyl-L-glutamate. It is the third step in the universal histidine degradation pathway. In Cupriavidus pinatubonensis (strain JMP 134 / LMG 1197) (Cupriavidus necator (strain JMP 134)), this protein is Imidazolonepropionase.